The chain runs to 638 residues: 1-deoxy-D-xylulose-5-phosphate synthase (638 aa).

Thiamine diphosphate-binding positions include histidine 72 and 113-115; that span reads GHA. Aspartate 144 contributes to the Mg(2+) binding site. Residues 145–146, asparagine 174, tyrosine 287, and glutamate 370 each bind thiamine diphosphate; that span reads GA. Mg(2+) is bound at residue asparagine 174.

Belongs to the transketolase family. DXPS subfamily. Homodimer. The cofactor is Mg(2+). It depends on thiamine diphosphate as a cofactor.

It catalyses the reaction D-glyceraldehyde 3-phosphate + pyruvate + H(+) = 1-deoxy-D-xylulose 5-phosphate + CO2. It functions in the pathway metabolic intermediate biosynthesis; 1-deoxy-D-xylulose 5-phosphate biosynthesis; 1-deoxy-D-xylulose 5-phosphate from D-glyceraldehyde 3-phosphate and pyruvate: step 1/1. Functionally, catalyzes the acyloin condensation reaction between C atoms 2 and 3 of pyruvate and glyceraldehyde 3-phosphate to yield 1-deoxy-D-xylulose-5-phosphate (DXP). The chain is 1-deoxy-D-xylulose-5-phosphate synthase from Picosynechococcus sp. (strain ATCC 27264 / PCC 7002 / PR-6) (Agmenellum quadruplicatum).